Consider the following 78-residue polypeptide: MICOS complex subunit MIC10 (78 aa).

Position 2 is an N-acetylserine (serine 2). A helical transmembrane segment spans residues 17 to 36 (AVVKIGTGFGLGIVFSLTFF). The Mitochondrial intermembrane portion of the chain corresponds to 37 to 78 (KRRMWPLAFGSGMGLGMAYSNCQHDFQAPYLLHGKYVKEQEQ).

This sequence belongs to the MICOS complex subunit Mic10 family. In terms of assembly, component of the mitochondrial contact site and cristae organizing system (MICOS) complex, composed of at least MICOS10/MIC10, CHCHD3/MIC19, CHCHD6/MIC25, APOOL/MIC27, IMMT/MIC60, APOO/MIC23/MIC26 and MICOS13/MIC13. This complex was also known under the names MINOS or MitOS complex. The MICOS complex associates with mitochondrial outer membrane proteins SAMM50, MTX1 and MTX2 (together described as components of the mitochondrial outer membrane sorting assembly machinery (SAM) complex) and DNAJC11, mitochondrial inner membrane protein TMEM11 and with HSPA9. The MICOS and SAM complexes together with DNAJC11 are part of a large protein complex spanning both membranes termed the mitochondrial intermembrane space bridging (MIB) complex. Interacts with IMMT/MIC60 and MICOS13/MIC13. Interacts with APOO/MIC23/MIC26 and APOOL/MIC27. Interacts with ARMC1.

The protein localises to the mitochondrion inner membrane. In terms of biological role, component of the MICOS complex, a large protein complex of the mitochondrial inner membrane that plays crucial roles in the maintenance of crista junctions, inner membrane architecture, and formation of contact sites to the outer membrane. This chain is MICOS complex subunit MIC10, found in Homo sapiens (Human).